The following is a 448-amino-acid chain: Trigger factor (448 aa).

Positions 172–257 (GDRVTVDFVG…MKKIEWPHLP (86 aa)) constitute a PPIase FKBP-type domain.

It belongs to the FKBP-type PPIase family. Tig subfamily.

The protein localises to the cytoplasm. The enzyme catalyses [protein]-peptidylproline (omega=180) = [protein]-peptidylproline (omega=0). Involved in protein export. Acts as a chaperone by maintaining the newly synthesized protein in an open conformation. Functions as a peptidyl-prolyl cis-trans isomerase. This is Trigger factor from Burkholderia cenocepacia (strain ATCC BAA-245 / DSM 16553 / LMG 16656 / NCTC 13227 / J2315 / CF5610) (Burkholderia cepacia (strain J2315)).